We begin with the raw amino-acid sequence, 176 residues long: dCTP deaminase (176 aa).

Residues 99–104 and aspartate 115 each bind dCTP; that span reads RSTLAR. Glutamate 125 acts as the Proton donor/acceptor in catalysis. Glutamine 163 provides a ligand contact to dCTP.

The protein belongs to the dCTP deaminase family. Homotrimer.

It carries out the reaction dCTP + H2O + H(+) = dUTP + NH4(+). The protein operates within pyrimidine metabolism; dUMP biosynthesis; dUMP from dCTP (dUTP route): step 1/2. Its function is as follows. Catalyzes the deamination of dCTP to dUTP. The polypeptide is dCTP deaminase (Pyrobaculum islandicum (strain DSM 4184 / JCM 9189 / GEO3)).